Consider the following 450-residue polypeptide: tRNA-2-methylthio-N(6)-dimethylallyladenosine synthase (450 aa).

An MTTase N-terminal domain is found at 7–127 (KKVFIKTYGC…LPDVLARVRG (121 aa)). The [4Fe-4S] cluster site is built by Cys16, Cys52, Cys90, Cys168, Cys172, and Cys175. The Radical SAM core domain maps to 154-388 (IKRGVTAFLT…LLLKQQQGFG (235 aa)). The TRAM domain occupies 389–450 (SSLVGSTIDT…GYNSLFAELA (62 aa)).

This sequence belongs to the methylthiotransferase family. MiaB subfamily. As to quaternary structure, monomer. [4Fe-4S] cluster is required as a cofactor.

It is found in the cytoplasm. It catalyses the reaction N(6)-dimethylallyladenosine(37) in tRNA + (sulfur carrier)-SH + AH2 + 2 S-adenosyl-L-methionine = 2-methylsulfanyl-N(6)-dimethylallyladenosine(37) in tRNA + (sulfur carrier)-H + 5'-deoxyadenosine + L-methionine + A + S-adenosyl-L-homocysteine + 2 H(+). Catalyzes the methylthiolation of N6-(dimethylallyl)adenosine (i(6)A), leading to the formation of 2-methylthio-N6-(dimethylallyl)adenosine (ms(2)i(6)A) at position 37 in tRNAs that read codons beginning with uridine. In Mesorhizobium japonicum (strain LMG 29417 / CECT 9101 / MAFF 303099) (Mesorhizobium loti (strain MAFF 303099)), this protein is tRNA-2-methylthio-N(6)-dimethylallyladenosine synthase.